We begin with the raw amino-acid sequence, 601 residues long: NADH-ubiquinone oxidoreductase chain 5 (601 aa).

15 helical membrane passes run 3–23, 36–56, 84–104, 114–134, 140–160, 171–191, 201–221, 240–260, 272–292, 324–346, 365–385, 404–426, 456–476, 483–503, and 581–601; these read LIMPFSIITLTILTIPIMMSY, VTSSVSYAFMTSMIPTMMFLL, FFSIIFVSVALFVTWSIMEFS, INQFFKYLLLFLITMMILVTA, LFIGWEGVGIMSFLLIGWWYG, AILYNRIGDIGFILTMAWLLL, IFMLKPTNLLPLLGLLVAAAG, TPVSALLHSSTMVVAGIFLLV, ILTMTLCLGAITTLFTAICAL, AFLHICTHAFFKAMLFMCSGSII, MPFTSSCLMIGSLALTGMPFL, NAWALLITLLATSFTASYSTRLI, LALGSIFAGFLISNYIPPLIT, LYMKLSALAVTIMGFMVAMGL, and LIKLYFMSFIISMTLATMLII.

This sequence belongs to the complex I subunit 5 family.

The protein resides in the mitochondrion inner membrane. It catalyses the reaction a ubiquinone + NADH + 5 H(+)(in) = a ubiquinol + NAD(+) + 4 H(+)(out). In terms of biological role, core subunit of the mitochondrial membrane respiratory chain NADH dehydrogenase (Complex I) that is believed to belong to the minimal assembly required for catalysis. Complex I functions in the transfer of electrons from NADH to the respiratory chain. The immediate electron acceptor for the enzyme is believed to be ubiquinone. The protein is NADH-ubiquinone oxidoreductase chain 5 (MT-ND5) of Dasypus novemcinctus (Nine-banded armadillo).